Consider the following 40-residue polypeptide: Dolichyl-diphosphooligosaccharide--protein glycosyltransferase subunit 4 (40 aa).

The Lumenal segment spans residues 1–4; that stretch reads MITD. Residues 5–25 form a helical membrane-spanning segment; sequence VQLAIFSNVLGVFLFLLVVAY. Topologically, residues 26–40 are cytoplasmic; it reads HYINANTGKSSIKTK.

This sequence belongs to the OST4 family. As to quaternary structure, component of the oligosaccharyltransferase (OST) complex.

Its subcellular location is the endoplasmic reticulum membrane. Subunit of the oligosaccharyl transferase (OST) complex that catalyzes the initial transfer of a defined glycan (Glc(3)Man(9)GlcNAc(2) in eukaryotes) from the lipid carrier dolichol-pyrophosphate to an asparagine residue within an Asn-X-Ser/Thr consensus motif in nascent polypeptide chains, the first step in protein N-glycosylation. N-glycosylation occurs cotranslationally and the complex associates with the Sec61 complex at the channel-forming translocon complex that mediates protein translocation across the endoplasmic reticulum (ER). All subunits are required for a maximal enzyme activity. This chain is Dolichyl-diphosphooligosaccharide--protein glycosyltransferase subunit 4, found in Drosophila virilis (Fruit fly).